The following is a 189-amino-acid chain: Peptidyl-tRNA hydrolase (189 aa).

Tyrosine 15 lines the tRNA pocket. Residue histidine 20 is the Proton acceptor of the active site. TRNA-binding residues include tyrosine 64, asparagine 66, and asparagine 112.

This sequence belongs to the PTH family. Monomer.

It is found in the cytoplasm. It carries out the reaction an N-acyl-L-alpha-aminoacyl-tRNA + H2O = an N-acyl-L-amino acid + a tRNA + H(+). In terms of biological role, hydrolyzes ribosome-free peptidyl-tRNAs (with 1 or more amino acids incorporated), which drop off the ribosome during protein synthesis, or as a result of ribosome stalling. Functionally, catalyzes the release of premature peptidyl moieties from peptidyl-tRNA molecules trapped in stalled 50S ribosomal subunits, and thus maintains levels of free tRNAs and 50S ribosomes. The protein is Peptidyl-tRNA hydrolase of Sulfurihydrogenibium sp. (strain YO3AOP1).